Here is a 308-residue protein sequence, read N- to C-terminus: Methionyl-tRNA formyltransferase (308 aa).

A (6S)-5,6,7,8-tetrahydrofolate-binding site is contributed by 109 to 112; the sequence is SLLP.

It belongs to the Fmt family.

The catalysed reaction is L-methionyl-tRNA(fMet) + (6R)-10-formyltetrahydrofolate = N-formyl-L-methionyl-tRNA(fMet) + (6S)-5,6,7,8-tetrahydrofolate + H(+). Functionally, attaches a formyl group to the free amino group of methionyl-tRNA(fMet). The formyl group appears to play a dual role in the initiator identity of N-formylmethionyl-tRNA by promoting its recognition by IF2 and preventing the misappropriation of this tRNA by the elongation apparatus. The sequence is that of Methionyl-tRNA formyltransferase from Caulobacter vibrioides (strain NA1000 / CB15N) (Caulobacter crescentus).